The chain runs to 622 residues: Sodium/potassium/calcium exchanger 4 (622 aa).

The N-terminal stretch at 1 to 38 (MALRGLIRQSKVRRRREMLPQQVGFVCAVLALVCCASG) is a signal peptide. The Extracellular segment spans residues 39-97 (LFGSLGHKTASAGKHVLLDTWRNRKLMAPINGTPLAKNCTDPAIHEFPTDLFSNKERQH). Asparagine 76 is a glycosylation site (N-linked (GlcNAc...) asparagine). Residues 98-118 (GAVLLHILGALYMFYALAIVC) form a helical membrane-spanning segment. The Cytoplasmic segment spans residues 119–142 (DDFFVPSLEKICEKLHLSEDVAGA). An Alpha-1 repeat occupies 139–179 (VAGATFMAAGSSTPELFASVIGVFITHGDVGVGTIVGSAVF). Residues 143 to 163 (TFMAAGSSTPELFASVIGVFI) traverse the membrane as a helical segment. The Extracellular segment spans residues 164-172 (THGDVGVGT). The helical transmembrane segment at 173-193 (IVGSAVFNILCIIGVCGLFAG) threads the bilayer. At 194-200 (QVVRLTW) the chain is on the cytoplasmic side. Residues 201 to 221 (WAVCRDSVYYTLSVIVLIAFI) traverse the membrane as a helical segment. Over 222–224 (YDE) the chain is Extracellular. A helical transmembrane segment spans residues 225–245 (EIVWWEGLVLIILYVFYILIM). At 246 to 457 (KYNMKMQTFF…RWEKFFMVTF (212 aa)) the chain is on the cytoplasmic side. The tract at residues 358–408 (ANGVNSKPLQNGRHENMENGNVPVENPEDPQQGQEQQPPPQPPPPEPESVE) is disordered. Positions 394 to 404 (QPPPQPPPPEP) are enriched in pro residues. The chain crosses the membrane as a helical span at residues 458 to 478 (ITATLWIAVFSYLMVWLVTII). Residue glycine 479 is a topological domain, extracellular. The helical transmembrane segment at 480-500 (YTLGIPDVIMGITFLAAGTSV) threads the bilayer. One copy of the Alpha-2 repeat lies at 495 to 526 (AAGTSVPDCMASLIVARQGLGDMAVSNTIGSN). Residues 501–526 (PDCMASLIVARQGLGDMAVSNTIGSN) are Cytoplasmic-facing. The chain crosses the membrane as a helical span at residues 527-547 (VFDILVGLGIPWGLQTMVINY). The Extracellular segment spans residues 548 to 557 (GSTVKINSRG). A helical membrane pass occupies residues 558–578 (LVYSVVLLLGSVALTVLGIHL). Over 579–586 (NKWRLDRK) the chain is Cytoplasmic. The chain crosses the membrane as a helical span at residues 587–607 (LGIYVLVLYAVFLCFSIMIEF). The Extracellular segment spans residues 608 to 622 (NVFTFVNLPMCREDD).

The protein belongs to the Ca(2+):cation antiporter (CaCA) (TC 2.A.19) family. SLC24A subfamily. Expressed in late secretory-stage and maturation-stage ameloblasts, with significantly increased expression during the late stages of amelogenesis (at protein level). Widely expressed in most regions of the brain, including hippocampus, neocortex, thalamus, striatum and olfactory bulb. Expressed in the olfactory sensory neurons.

Its subcellular location is the cell membrane. It localises to the cytoplasm. The catalysed reaction is Ca(2+)(out) + K(+)(out) + 4 Na(+)(in) = Ca(2+)(in) + K(+)(in) + 4 Na(+)(out). In terms of biological role, calcium, potassium:sodium antiporter that transports 1 Ca(2+) and 1 K(+) in exchange for 4 Na(+). Controls the rapid response termination and proper regulation of adaptation in olfactory sensory neurons (OSNs) which subsequently influences how odor information is encoded and perceived. May play a role in calcium transport during amelogenesis. The sequence is that of Sodium/potassium/calcium exchanger 4 from Mus musculus (Mouse).